We begin with the raw amino-acid sequence, 130 residues long: S-protein homolog 22 (130 aa).

Residues 1–21 (MKYFTIFFIFFSLCMFGHVSG) form the signal peptide.

This sequence belongs to the plant self-incompatibility (S1) protein family.

Its subcellular location is the secreted. The protein is S-protein homolog 22 of Arabidopsis thaliana (Mouse-ear cress).